A 162-amino-acid chain; its full sequence is MSLLTPDIGLLFWMLLSFGIVFFVAAKYGFPVIVKMVDERNAFINKSLEEAKQANKRLRGIKEEEERLLKETYNKRIFIIKEANEMRIKIINDAKEKANFESNRLMKNAKENIQKEKELAMQDIRQQIAALSIDIAERVLRKSLDNKHEQLNLINELIKELN.

Residues 6 to 26 traverse the membrane as a helical segment; the sequence is PDIGLLFWMLLSFGIVFFVAA.

The protein belongs to the ATPase B chain family. F-type ATPases have 2 components, F(1) - the catalytic core - and F(0) - the membrane proton channel. F(1) has five subunits: alpha(3), beta(3), gamma(1), delta(1), epsilon(1). F(0) has three main subunits: a(1), b(2) and c(10-14). The alpha and beta chains form an alternating ring which encloses part of the gamma chain. F(1) is attached to F(0) by a central stalk formed by the gamma and epsilon chains, while a peripheral stalk is formed by the delta and b chains.

The protein resides in the cell inner membrane. Its function is as follows. F(1)F(0) ATP synthase produces ATP from ADP in the presence of a proton or sodium gradient. F-type ATPases consist of two structural domains, F(1) containing the extramembraneous catalytic core and F(0) containing the membrane proton channel, linked together by a central stalk and a peripheral stalk. During catalysis, ATP synthesis in the catalytic domain of F(1) is coupled via a rotary mechanism of the central stalk subunits to proton translocation. In terms of biological role, component of the F(0) channel, it forms part of the peripheral stalk, linking F(1) to F(0). The sequence is that of ATP synthase subunit b from Azobacteroides pseudotrichonymphae genomovar. CFP2.